Reading from the N-terminus, the 355-residue chain is Tetraspanin-10 (355 aa).

The disordered stretch occupies residues methionine 1–proline 33. At methionine 1–tyrosine 78 the chain is on the cytoplasmic side. A helical membrane pass occupies residues leucine 79 to leucine 99. Topologically, residues tryptophan 100–proline 120 are extracellular. The chain crosses the membrane as a helical span at residues methionine 121 to glycine 141. The Cytoplasmic portion of the chain corresponds to alanine 142 to serine 154. Residues glycine 155–tryptophan 175 form a helical membrane-spanning segment. Residues glycine 176 to glycine 355 are Extracellular-facing. Cystine bridges form between cysteine 212/cysteine 279, cysteine 213/cysteine 243, cysteine 229/cysteine 237, and cysteine 244/cysteine 258. Residue asparagine 228 is glycosylated (N-linked (GlcNAc...) asparagine). Residues tyrosine 327–glycine 355 form a disordered region. The span at serine 341–glycine 355 shows a compositional bias: pro residues.

It belongs to the tetraspanin (TM4SF) family. As to quaternary structure, interacts with ADAM10. As to expression, expressed in the eye, including iris, ciliary body, retinal pigment epithelium, but not lens (protein level).

The protein localises to the cell membrane. In terms of biological role, part of TspanC8 subgroup, composed of 6 members that interact with the transmembrane metalloprotease ADAM10. This interaction is required for ADAM10 exit from the endoplasmic reticulum and for enzymatic maturation and trafficking to the cell surface as well as substrate specificity. Different TspanC8/ADAM10 complexes have distinct substrates. This is Tetraspanin-10 from Homo sapiens (Human).